Reading from the N-terminus, the 195-residue chain is ATP-dependent Clp protease proteolytic subunit (195 aa).

Catalysis depends on serine 98, which acts as the Nucleophile. The active site involves histidine 123.

Belongs to the peptidase S14 family. As to quaternary structure, fourteen ClpP subunits assemble into 2 heptameric rings which stack back to back to give a disk-like structure with a central cavity, resembling the structure of eukaryotic proteasomes.

It localises to the cytoplasm. The catalysed reaction is Hydrolysis of proteins to small peptides in the presence of ATP and magnesium. alpha-casein is the usual test substrate. In the absence of ATP, only oligopeptides shorter than five residues are hydrolyzed (such as succinyl-Leu-Tyr-|-NHMec, and Leu-Tyr-Leu-|-Tyr-Trp, in which cleavage of the -Tyr-|-Leu- and -Tyr-|-Trp bonds also occurs).. Cleaves peptides in various proteins in a process that requires ATP hydrolysis. Has a chymotrypsin-like activity. Plays a major role in the degradation of misfolded proteins. This is ATP-dependent Clp protease proteolytic subunit from Caldanaerobacter subterraneus subsp. tengcongensis (strain DSM 15242 / JCM 11007 / NBRC 100824 / MB4) (Thermoanaerobacter tengcongensis).